Consider the following 543-residue polypeptide: MKTTPLSIQTTNKLVTNYKNNDASVMKYFDYSSIHYEQERLAYLNNRTYKRQDFVKAVHKLHKKWGAPEASMEKLNKLVDEQAVAVVGGQQAGLLSGPLYSIHKVISVIQLAKEQEKKLGIPVVPIFWIAGEDHDFDEINHTYVPTTDMKMKKVKLQNKSIDAGRKSVTDLEFEKDKLREWVEDVFLSLKETDYTQDIHSLVQTVLSESDSYSEFFAKFIFQLFPDQGIVLLDSHASEIREIETDFFLEMIEHQQGISSAVKSTIDELKAEEYSISLDALDGDAHLFYHDEQLGRVLLQVDPDGMWVDKQHNMRFTVEELRSIAINSPHLLSNNVITRPMMQEKLIPTLAFVGGPGEIAYWSALKDSFHLLELKMPPIVPRISFTYIDRYTSRLLDKYNLNVSEIISTGVNDHKRRFLDEKNNDNIDEVVEEVKAQISDIHKPLRDISASMGDDIKALSESNLSYILNDVEFLRKRLNNEIRKTYAKEISEFDRMEMILRPNNGLQERIWNPIYIMNCCGVDVFTEMVNNHTFVQEEHWIIHL.

A coiled-coil region spans residues 419–440 (DEKNNDNIDEVVEEVKAQISDI).

The protein belongs to the BshC family.

Functionally, involved in bacillithiol (BSH) biosynthesis. May catalyze the last step of the pathway, the addition of cysteine to glucosamine malate (GlcN-Mal) to generate BSH. The protein is Putative cysteine ligase BshC of Oceanobacillus iheyensis (strain DSM 14371 / CIP 107618 / JCM 11309 / KCTC 3954 / HTE831).